Here is a 481-residue protein sequence, read N- to C-terminus: Protein nucleotidyltransferase YdiU (481 aa).

ATP-binding residues include G85, G87, R88, K108, D120, G121, R172, and R179. D248 serves as the catalytic Proton acceptor. Mg(2+)-binding residues include N249 and D258. D258 is a binding site for ATP.

This sequence belongs to the SELO family. Mg(2+) serves as cofactor. Mn(2+) is required as a cofactor.

It catalyses the reaction L-seryl-[protein] + ATP = 3-O-(5'-adenylyl)-L-seryl-[protein] + diphosphate. It carries out the reaction L-threonyl-[protein] + ATP = 3-O-(5'-adenylyl)-L-threonyl-[protein] + diphosphate. The catalysed reaction is L-tyrosyl-[protein] + ATP = O-(5'-adenylyl)-L-tyrosyl-[protein] + diphosphate. The enzyme catalyses L-histidyl-[protein] + UTP = N(tele)-(5'-uridylyl)-L-histidyl-[protein] + diphosphate. It catalyses the reaction L-seryl-[protein] + UTP = O-(5'-uridylyl)-L-seryl-[protein] + diphosphate. It carries out the reaction L-tyrosyl-[protein] + UTP = O-(5'-uridylyl)-L-tyrosyl-[protein] + diphosphate. In terms of biological role, nucleotidyltransferase involved in the post-translational modification of proteins. It can catalyze the addition of adenosine monophosphate (AMP) or uridine monophosphate (UMP) to a protein, resulting in modifications known as AMPylation and UMPylation. The sequence is that of Protein nucleotidyltransferase YdiU from Cereibacter sphaeroides (strain ATCC 17023 / DSM 158 / JCM 6121 / CCUG 31486 / LMG 2827 / NBRC 12203 / NCIMB 8253 / ATH 2.4.1.) (Rhodobacter sphaeroides).